The primary structure comprises 400 residues: Malonyl CoA-acyl carrier protein transacylase (400 aa).

Active-site residues include serine 92 and histidine 201.

It belongs to the FabD family.

The catalysed reaction is holo-[ACP] + malonyl-CoA = malonyl-[ACP] + CoA. In terms of biological role, is involved in the mycosubtilin synthetase assembly, by catalyzing the transfer of malonyl groups to a specific acyl-carrier-protein domain on MycA. The chain is Malonyl CoA-acyl carrier protein transacylase (fenF) from Bacillus subtilis.